A 259-amino-acid chain; its full sequence is F-box/kelch-repeat protein At2g22050 (259 aa).

Basic residues predominate over residues 1–12; it reads MSPSSKKFKKQS. Residues 1–29 form a disordered region; it reads MSPSSKKFKKQSSSKSVKPPLEDNDPSLP. The F-box domain maps to 28-76; that stretch reads LPSFTSLPDEIVLDCLQRVPRSYYLNLCRVSKTLRSLVRSPELSRLRTL. The Kelch repeat unit spans residues 142–186; sequence EIYFVGGSFEPMSELWILDTRTGMFRQGPSMKVARTDEASVGVIN.

In Arabidopsis thaliana (Mouse-ear cress), this protein is F-box/kelch-repeat protein At2g22050.